The following is a 250-amino-acid chain: PTB-containing, cubilin and LRP1-interacting protein (250 aa).

The 158-residue stretch at 93–250 (VTYLGKVSTT…VSQELESDDG (158 aa)) folds into the PID domain. The segment at 229–250 (DGRIHSNSSSEEVSQELESDDG) is disordered. Phosphoserine is present on residues Ser-236 and Ser-247. Residues 241–250 (VSQELESDDG) are compositionally biased toward acidic residues.

Found in a complex with PID1/PCLI1, LRP1 and CUBNI. Interacts with LRP1 and CUBN. In terms of tissue distribution, expressed in subcutaneous fat, heart, skeletal muscle, brain, colon, thymus, spleen, kidney, liver, small intestine, placenta, lung and peripheral blood leukocyte.

Its subcellular location is the cytoplasm. Increases proliferation of preadipocytes without affecting adipocytic differentiation. The sequence is that of PTB-containing, cubilin and LRP1-interacting protein (PID1) from Homo sapiens (Human).